Consider the following 595-residue polypeptide: P2X purinoceptor 7 (595 aa).

The Cytoplasmic segment spans residues 1–22 (MPACCSCSDVFQYETNKVTRIQ). Cysteine 4 carries S-palmitoyl cysteine lipidation. The chain crosses the membrane as a helical span at residues 23–46 (SMNYGTIKWFFHVIIFSYVCFALV). The Extracellular portion of the chain corresponds to 47-328 (SDKLYQRKEP…ILVFGTGGKF (282 aa)). Intrachain disulfides connect cysteine 119–cysteine 168, cysteine 129–cysteine 152, and cysteine 135–cysteine 162. An ADP-ribosylarginine mark is found at arginine 125 and arginine 133. The N-linked (GlcNAc...) asparagine glycan is linked to asparagine 187. Threonine 189 contacts ATP. Residues asparagine 202 and asparagine 213 are each glycosylated (N-linked (GlcNAc...) asparagine). Cysteine 216 and cysteine 226 are oxidised to a cystine. Residue asparagine 241 is glycosylated (N-linked (GlcNAc...) asparagine). Cysteine 260 and cysteine 269 are joined by a disulfide. An N-linked (GlcNAc...) asparagine glycan is attached at asparagine 284. 2 residues coordinate ATP: arginine 294 and lysine 311. A helical membrane pass occupies residues 329–353 (DIIQLVVYIGSTLSYFGLAAVFIDF). Serine 342 serves as a coordination point for Na(+). Phosphotyrosine is present on tyrosine 343. The Cytoplasmic segment spans residues 354–595 (LIDTYSSNCC…GQYSGFKSPY (242 aa)). Positions 360–377 (SNCCRSHIYPWCKCCQPC) are C-cys anchor. S-palmitoyl cysteine attachment occurs at residues cysteine 362, cysteine 363, cysteine 374, and cysteine 377. Residue serine 390 is modified to Phosphoserine. Positions 395–595 (KPTLKYVSFV…GQYSGFKSPY (201 aa)) are cytoplasmic ballast. Positions 479, 499, and 506 each coordinate Zn(2+). GTP is bound by residues arginine 546, histidine 547, tyrosine 550, and alanine 567. A Zn(2+)-binding site is contributed by cysteine 572. GTP is bound by residues lysine 583, serine 589, and glycine 590.

The protein belongs to the P2X receptor family. Homotrimers. Interacts with LAMA3, ITGB2, ACTB, ACTN4, SVIL, MPP3, HSPA1, HSPCB, HSPA8, PIK230 and PTPRB. Interacts (via C-terminus) with EMP2. Interacts with isoform B; this interaction potentiates P2RX7 responses. In terms of processing, phosphorylation results in its inactivation. Post-translationally, ADP-ribosylation at Arg-125 is necessary and sufficient to activate P2RX7 and gate the channel. Palmitoylation of several cysteines in the C-terminal cytoplasmic tail is required for efficient localization to cell surface. Palmitoylation prevents channel desensitization by physically anchoring the palmitoylated groups to the membrane. Widely expressed with highest levels in brain and immune tissues. As to expression, predominant form in many tissues.

It is found in the cell membrane. The enzyme catalyses Ca(2+)(in) = Ca(2+)(out). It catalyses the reaction K(+)(in) = K(+)(out). The catalysed reaction is Na(+)(in) = Na(+)(out). Its activity is regulated as follows. Activated by high extracellular ATP levels (0.1-2.5 mM). The synthetic analog 2'(3')-O-(4-benzoylbenzoyl)ATP (BzATP) acts as a potent agonist. Does not undergo desensitization, instead, undergoes a facilitation process where currents progressively increase with repetitive or prolonged agonist application. Palmitoylation prevents channel desensitization. The permeability of the P2RX7 channel is modulated by the amount of cholesterol in the plasma membrane. Its function is as follows. ATP-gated nonselective transmembrane cation channel that requires high millimolar concentrations of ATP for activation. Upon ATP binding, it rapidly opens to allow the influx of small cations Na(+) and Ca(2+), and the K(+) efflux. Also has the ability to form a large pore in the cell membrane, allowing the passage of large cationic molecules. In microglia, may mediate NADPH transport across the plasma membrane. In immune cells, P2RX7 acts as a molecular sensor in pathological inflammatory states by detecting and responding to high local concentrations of extracellar ATP. In microglial cells, P2RX7 activation leads to the release of pro-inflammatory cytokines, such as IL-1beta and IL-18, through the activation of the NLRP3 inflammasome and caspase-1. Cooperates with KCNK6 to activate NLRP3 inflammasome. Activates death pathways leading to apoptosis and autophagy. Activates death pathways leading to pyroptosis. Shows ion channel activity but no macropore function. In terms of biological role, non-functional channel. This is P2X purinoceptor 7 (P2RX7) from Homo sapiens (Human).